The following is a 181-amino-acid chain: UPF0232 protein SAV_4320 (181 aa).

Polar residues predominate over residues 1–10; that stretch reads MSDTPAQTPE. 2 disordered regions span residues 1–64 and 156–181; these read MSDT…GRDP and QGPGGPARRYGPLRAPGSTGPGDTYG. Over residues 30–39 the composition is skewed to basic and acidic residues; it reads AAKEQARARG.

The protein belongs to the UPF0232 family.

This Streptomyces avermitilis (strain ATCC 31267 / DSM 46492 / JCM 5070 / NBRC 14893 / NCIMB 12804 / NRRL 8165 / MA-4680) protein is UPF0232 protein SAV_4320.